The sequence spans 309 residues: Porphobilinogen deaminase (309 aa).

Position 244 is an S-(dipyrrolylmethanemethyl)cysteine (C244).

Belongs to the HMBS family. As to quaternary structure, monomer. Requires dipyrromethane as cofactor.

The enzyme catalyses 4 porphobilinogen + H2O = hydroxymethylbilane + 4 NH4(+). The protein operates within porphyrin-containing compound metabolism; protoporphyrin-IX biosynthesis; coproporphyrinogen-III from 5-aminolevulinate: step 2/4. Tetrapolymerization of the monopyrrole PBG into the hydroxymethylbilane pre-uroporphyrinogen in several discrete steps. The polypeptide is Porphobilinogen deaminase (Rhizobium meliloti (strain 1021) (Ensifer meliloti)).